A 164-amino-acid polypeptide reads, in one-letter code: Large ribosomal subunit protein uL15 (164 aa).

Disordered regions lie at residues 1–49 (MTKL…SIAG) and 143–164 (EKAG…SAEA). Residues 22-36 (RGPGSGKGKTAGRGV) are compositionally biased toward gly residues.

It belongs to the universal ribosomal protein uL15 family. Part of the 50S ribosomal subunit.

Functionally, binds to the 23S rRNA. This chain is Large ribosomal subunit protein uL15, found in Phenylobacterium zucineum (strain HLK1).